The primary structure comprises 3926 residues: Protein bassoon (3926 aa).

The disordered stretch occupies residues 1–161 (MGNEVSLEGG…PTSPYSVPQI (161 aa)). Gly-2 carries N-myristoyl glycine lipidation. 2 stretches are compositionally biased toward pro residues: residues 15–30 (PLPP…PGPG) and 58–72 (PPVP…PGPG). Positions 23-32 (PGPGPGPGPG) are 5 X 2 AA tandem repeats of P-G. The interval 61–74 (PGPGPGPGPGPGPG) is 7 X 2 AA tandem repeats of P-G. 2 stretches are compositionally biased toward polar residues: residues 90 to 105 (RAAS…TTPG) and 130 to 157 (QVDS…SPYS). Position 145 is a phosphoserine (Ser-145). Omega-N-methylarginine is present on Arg-148. 2 C4-type zinc fingers span residues 170–193 (CPIC…CTQC) and 198–220 (CNQC…CLNC). Disordered regions lie at residues 231–343 (TTAP…EQTQ) and 366–459 (SVQP…KTMP). The segment covering 233 to 243 (APRSKSQQQLH) has biased composition (polar residues). Phosphoserine is present on residues Ser-244 and Ser-248. Over residues 366 to 377 (SVQPEADTQGQP) the composition is skewed to polar residues. C4-type zinc fingers lie at residues 465–488 (CPLC…CTTC) and 493–515 (CNLC…CLNC). 2 disordered regions span residues 524–927 (SLGE…LQGG) and 940–1248 (GSYG…AEGT). The span at 552 to 569 (PLKQKGPQGLGQPSGPLP) shows a compositional bias: low complexity. 3 tandem repeats follow at residues 571 to 577 (KASPLST), 578 to 584 (KASPLPS), and 585 to 591 (KASPQAK). The segment at 571–591 (KASPLSTKASPLPSKASPQAK) is 3 X 7 AA tandem repeats of K-A-S-P-[LQ]-[APS]-[KST]. Residues 619–631 (MPKPPPETTPTPA) are compositionally biased toward pro residues. Positions 671 to 680 (QDASRSPQSL) are enriched in polar residues. The span at 681–698 (SDTGYSSDGISSSQSEIT) shows a compositional bias: low complexity. Residues 771 to 787 (FDSDEELEDILEEDEDS) show a composition bias toward acidic residues. The segment covering 788–797 (AEWRRRREQQ) has biased composition (basic and acidic residues). Positions 851–862 (SAEEDNLEEDDT) are enriched in acidic residues. Residue Arg-867 is modified to Omega-N-methylarginine. Phosphoserine is present on Ser-970. A compositionally biased stretch (low complexity) spans 984 to 1001 (PASTPSYTSGTSPTSLSS). The stretch at 1037–1092 (IEDSSEEEELREEEELLREQEKMREVEQQRIRSTARKTRRDKEELRAQRRRERSKT) forms a coiled coil. The span at 1039 to 1052 (DSSEEEELREEEEL) shows a compositional bias: acidic residues. Residues Ser-1040 and Ser-1041 each carry the phosphoserine modification. The segment covering 1053–1066 (LREQEKMREVEQQR) has biased composition (basic and acidic residues). Ser-1090 carries the phosphoserine modification. A Phosphothreonine modification is found at Thr-1092. Phosphoserine occurs at positions 1098 and 1104. Residues 1107–1122 (EELRQAAEMEELHRSS) show a composition bias toward basic and acidic residues. Low complexity-rich tracts occupy residues 1123-1133 (CSEYSPSPSLD) and 1163-1180 (SPTE…SGRP). Positions 1181 to 1208 (LKSAEEAYEEMMRKAELLQRQQGQAAGA) form a coiled coil. Residues 1182 to 1197 (KSAEEAYEEMMRKAEL) are compositionally biased toward basic and acidic residues. The segment covering 1199 to 1209 (QRQQGQAAGAR) has biased composition (low complexity). At Ser-1226 the chain carries Phosphoserine. Residues 1276–1294 (RDLAFAEDKKKEKQFLNAE) are a coiled coil. Disordered stretches follow at residues 1298-1547 (MDPM…RLVW) and 1570-1620 (RMVH…RVPS). Positions 1322–1332 (SFSTPTSSDSS) are enriched in low complexity. An O-linked (GlcNAc) threonine glycan is attached at Thr-1343. Positions 1346 to 1355 (FAKETQDPLK) are enriched in basic and acidic residues. Low complexity-rich tracts occupy residues 1358–1367 (SSPASPSSAS) and 1377–1392 (GPGT…CPAG). Thr-1384 is a glycosylation site (O-linked (GlcNAc) threonine). A compositionally biased stretch (polar residues) spans 1408-1434 (RSPSPSSTAHSYGHSPTTANYGSQTED). A compositionally biased stretch (low complexity) spans 1466 to 1493 (PSRAYSYFASSSPPLSPSSPSESPTFSP). A phosphoserine mark is found at Ser-1477, Ser-1486, and Ser-1488. Over residues 1570 to 1598 (RMVHASASTSPLCSPTETQPTTHGYSQTT) the composition is skewed to polar residues. The span at 1606 to 1616 (PPEPPGPPGFP) shows a compositional bias: pro residues. Omega-N-methylarginine is present on residues Arg-1787 and Arg-1791. Arg-1801 bears the Asymmetric dimethylarginine; alternate mark. Omega-N-methylarginine; alternate is present on Arg-1801. Arg-1813 carries the post-translational modification Omega-N-methylarginine. The disordered stretch occupies residues 1924-1978 (PEKSMADAAPPGQSSSPFYGPRDPEPPEPPTYRAQGVVGPGPHEEQRPYPQGLPG). Phosphoserine is present on residues Ser-1985 and Ser-2041. 2 positions are modified to omega-N-methylarginine: Arg-2046 and Arg-2076. Arg-2250, Arg-2260, and Arg-2266 each carry asymmetric dimethylarginine. The interval 2287 to 2309 (AAKAPGAGGPSRPEMPVGAAREE) is disordered. A glycan (O-linked (GlcNAc) threonine) is linked at Thr-2314. Over residues 2324–2341 (GAPAPAPLAGQKPPADAA) the composition is skewed to low complexity. Disordered stretches follow at residues 2324–2370 (GAPA…KQQE) and 2532–2568 (PSSA…ACEL). A coiled-coil region spans residues 2351–2476 (RPGFEKEEAS…EEQKQRQKAP (126 aa)). The segment covering 2353–2370 (GFEKEEASQEERQRKQQE) has biased composition (basic and acidic residues). Over residues 2533 to 2543 (SSASDMSLQTE) the composition is skewed to polar residues. Position 2570 is a phosphoserine (Ser-2570). Phosphothreonine occurs at positions 2587 and 2614. The segment at 2601 to 2655 (RRRARRSADCSVQTDDEDSAEWEQPVRRRRSRLPRHSDSGSDSKHDATASSSSAA) is disordered. The segment covering 2635–2647 (RHSDSGSDSKHDA) has biased composition (basic and acidic residues). A glycan (O-linked (GlcNAc) threonine) is linked at Thr-2691. The interaction with DAO stretch occupies residues 2721-3268 (EPDGQAQGVA…PGSSGRPGKE (548 aa)). Residues Ser-2802, Ser-2851, and Ser-2857 each carry the phosphoserine modification. The segment at 2845–2865 (TLQRSLSDPKPLSPTAEESAK) is disordered. O-linked (GlcNAc) threonine glycosylation is present at Thr-2936. A coiled-coil region spans residues 2939–2981 (SLLRELDRDLRLVEHESTKLRKKQAELDEEEKEIDAKLKYLEL). Ser-3013 carries the phosphoserine modification. Positions 3039–3055 (AAAPATPSGPTAFQQPR) are enriched in low complexity. 3 disordered regions span residues 3039–3375 (AAAP…FSPI), 3424–3551 (GMSS…PRAH), and 3572–3897 (EAYH…SVFS). Over residues 3083-3095 (YPGPSTYPAPAFP) the composition is skewed to pro residues. Positions 3165–3176 (ASPVVPMSSAPS) are enriched in low complexity. The segment covering 3205 to 3228 (SVSQSPAPTYPSDSHYTSLEQNVP) has biased composition (polar residues). Ser-3291 bears the Phosphoserine mark. Composition is skewed to basic and acidic residues over residues 3321 to 3333 (GDSD…RVEK), 3363 to 3375 (QGME…FSPI), and 3465 to 3477 (GYER…ERLQ). A Phosphoserine modification is found at Ser-3373. Omega-N-methylarginine is present on Arg-3492. Basic and acidic residues-rich tracts occupy residues 3540-3551 (VQEHVKDGPRAH), 3583-3593 (WFDKPRDARSD), 3628-3647 (LWPH…EHRH), and 3657-3681 (HTGE…EARP). Polar residues predominate over residues 3703 to 3712 (AEYSQPSRAS). A compositionally biased stretch (low complexity) spans 3741–3807 (PQAQPQLQGR…RLQQQSQPTT (67 aa)). Arg-3808 carries the omega-N-methylarginine modification. Low complexity-rich tracts occupy residues 3849–3860 (AKAPQQGRAPQA) and 3882–3892 (GAPAGQPGADG).

As to quaternary structure, interacts with PCLO, ERC2/CAST1, RIMS1 and UNC13A. Interacts with TPRG1L. Interacts with DYNLL1 and DYNLL2; these interactions potentially link PTVs to dynein and myosin V motor complexes. Interacts with ATG5; this interaction is important for the regulation of presynaptic autophagy. Interacts (via C-terminus) with TRIO (via N-terminus). Interacts with CTBP1. Interacts with SIAH1; this interaction negatively regulates SIAH1 E3 ligase activity. Interacts (via coiled region) with DAO; the interaction is direct. In terms of processing, myristoylated. The N-terminal myristoylation is not sufficient for presynaptic localization. In terms of tissue distribution, exclusively expressed in brain.

It localises to the cytoplasm. The protein localises to the presynaptic active zone. The protein resides in the cytoskeleton. It is found in the cytoplasmic vesicle. Its subcellular location is the secretory vesicle. It localises to the synaptic vesicle membrane. Its function is as follows. Scaffold protein of the presynaptic cytomatrix at the active zone (CAZ) which is the place in the synapse where neurotransmitter is released. After synthesis, participates in the formation of Golgi-derived membranous organelles termed Piccolo-Bassoon transport vesicles (PTVs) that are transported along axons to sites of nascent synaptic contacts. At the presynaptic active zone, regulates the spatial organization of synaptic vesicle cluster, the protein complexes that execute membrane fusion and compensatory endocytosis. Also functions in processes other than assembly such as the regulation of specific presynaptic protein ubiquitination by interacting with SIAH1 or the regulation of presynaptic autophagy by associating with ATG5. Also mediates synapse to nucleus communication leading to reconfiguration of gene expression by associating with the transcriptional corepressor CTBP1 and by subsequently reducing the size of its pool available for nuclear import. Inhibits the activity of the proportion of DAO enzyme that localizes to the presynaptic active zone, which may modulate synaptic transmission. This is Protein bassoon from Homo sapiens (Human).